A 154-amino-acid chain; its full sequence is Crossover junction endodeoxyribonuclease RuvC (154 aa).

Active-site residues include D7, E67, and D139. Mg(2+) contacts are provided by D7, E67, and D139.

This sequence belongs to the RuvC family. Homodimer which binds Holliday junction (HJ) DNA. The HJ becomes 2-fold symmetrical on binding to RuvC with unstacked arms; it has a different conformation from HJ DNA in complex with RuvA. In the full resolvosome a probable DNA-RuvA(4)-RuvB(12)-RuvC(2) complex forms which resolves the HJ. The cofactor is Mg(2+).

The protein resides in the cytoplasm. The catalysed reaction is Endonucleolytic cleavage at a junction such as a reciprocal single-stranded crossover between two homologous DNA duplexes (Holliday junction).. Functionally, the RuvA-RuvB-RuvC complex processes Holliday junction (HJ) DNA during genetic recombination and DNA repair. Endonuclease that resolves HJ intermediates. Cleaves cruciform DNA by making single-stranded nicks across the HJ at symmetrical positions within the homologous arms, yielding a 5'-phosphate and a 3'-hydroxyl group; requires a central core of homology in the junction. The consensus cleavage sequence is 5'-(A/T)TT(C/G)-3'. Cleavage occurs on the 3'-side of the TT dinucleotide at the point of strand exchange. HJ branch migration catalyzed by RuvA-RuvB allows RuvC to scan DNA until it finds its consensus sequence, where it cleaves and resolves the cruciform DNA. The polypeptide is Crossover junction endodeoxyribonuclease RuvC (Prochlorococcus marinus (strain MIT 9313)).